Here is a 207-residue protein sequence, read N- to C-terminus: Putative acetyltransferase C18B11.09c (207 aa).

The protein belongs to the transferase hexapeptide repeat family.

The protein is Putative acetyltransferase C18B11.09c of Schizosaccharomyces pombe (strain 972 / ATCC 24843) (Fission yeast).